Here is a 198-residue protein sequence, read N- to C-terminus: uncharacterized protein (198 aa).

The interval glutamate 72–glutamate 95 is disordered. Positions glutamate 75–aspartate 94 are enriched in acidic residues. The stretch at glutamate 106–lysine 136 forms a coiled coil.

This is an uncharacterized protein from Plasmodium falciparum (isolate 3D7).